We begin with the raw amino-acid sequence, 147 residues long: D-aminoacyl-tRNA deacylase (147 aa).

The short motif at 136–137 (GP) is the Gly-cisPro motif, important for rejection of L-amino acids element.

The protein belongs to the DTD family. As to quaternary structure, homodimer.

Its subcellular location is the cytoplasm. It catalyses the reaction glycyl-tRNA(Ala) + H2O = tRNA(Ala) + glycine + H(+). The catalysed reaction is a D-aminoacyl-tRNA + H2O = a tRNA + a D-alpha-amino acid + H(+). An aminoacyl-tRNA editing enzyme that deacylates mischarged D-aminoacyl-tRNAs. Also deacylates mischarged glycyl-tRNA(Ala), protecting cells against glycine mischarging by AlaRS. Acts via tRNA-based rather than protein-based catalysis; rejects L-amino acids rather than detecting D-amino acids in the active site. By recycling D-aminoacyl-tRNA to D-amino acids and free tRNA molecules, this enzyme counteracts the toxicity associated with the formation of D-aminoacyl-tRNA entities in vivo and helps enforce protein L-homochirality. The sequence is that of D-aminoacyl-tRNA deacylase from Nitratiruptor sp. (strain SB155-2).